A 56-amino-acid chain; its full sequence is Cecropin-A2 (56 aa).

Arg55 carries the post-translational modification Arginine amide.

It belongs to the cecropin family.

Its subcellular location is the secreted. Its function is as follows. Cecropins have lytic and antibacterial activity against several Gram-positive and Gram-negative bacteria. The sequence is that of Cecropin-A2 (CecA2) from Drosophila yakuba (Fruit fly).